Consider the following 427-residue polypeptide: Protein TIFY 6a (427 aa).

Residues 1 to 25 (MERDFLGAIWRKEEAAGKPEEHSDY) are compositionally biased toward basic and acidic residues. 2 disordered regions span residues 1 to 32 (MERDFLGAIWRKEEAAGKPEEHSDYRGGGGGA) and 128 to 154 (YGVAAPHHFPSPSPSPRHPVPFGHANP). The span at 136–146 (FPSPSPSPRHP) shows a compositional bias: pro residues. The 36-residue stretch at 196–231 (QNPKVTQMTIFYDGLVNVFDNIPVEKAQELMLLASR) folds into the Tify domain. The interval 296 to 327 (SFSSSNDSAGPKSGGLPLAVTPLSQASPSQPI) is disordered. Over residues 317 to 327 (PLSQASPSQPI) the composition is skewed to polar residues. The Jas signature appears at 343–367 (PQARKASLARFLEKRKERVSSVAPY). Positions 345 to 352 (ARKASLAR) match the Nuclear localization signal motif. The tract at residues 361 to 427 (VSSVAPYPSS…QEPPSTKLQI (67 aa)) is disordered. 2 stretches are compositionally biased toward polar residues: residues 369 to 402 (SSKSPLESSDTIGSPSTPSKSSCTDITPSTNNCE) and 411 to 427 (RNISFSSQEPPSTKLQI).

It belongs to the TIFY/JAZ family. As to quaternary structure, interacts with COI1A. Interacts with COI1A and COI1B in a coronatine-dependent manner. Coronatine is an analog of jasmonoyl isoleucine (JA-Ile). In terms of processing, ubiquitinated. Targeted for degradation by the SCF(COI1) E3 ubiquitin ligase-proteasome pathway during jasmonate signaling.

It is found in the nucleus. In terms of biological role, repressor of jasmonate responses. The chain is Protein TIFY 6a from Oryza sativa subsp. japonica (Rice).